A 64-amino-acid chain; its full sequence is Large ribosomal subunit protein bL35 (64 aa).

2 stretches are compositionally biased toward basic residues: residues M1–R15 and V23–R43. A disordered region spans residues M1–R64.

This sequence belongs to the bacterial ribosomal protein bL35 family.

This is Large ribosomal subunit protein bL35 from Frankia alni (strain DSM 45986 / CECT 9034 / ACN14a).